The sequence spans 642 residues: Cysteine-rich receptor-like protein kinase 27 (642 aa).

A signal peptide spans 1-24 (MASTSIMLSSFFSFFFLTFFVTYA). The Extracellular segment spans residues 25–274 (QQNVTVHTIC…QGKSKDRSKT (250 aa)). 7 N-linked (GlcNAc...) asparagine glycosylation sites follow: N27, N40, N44, N70, N145, N173, and N258. Gnk2-homologous domains are found at residues 29–130 (TVHT…SRII) and 136–240 (PVPF…VYPF). Residues 275-295 (LIFAVVPIVAIILGLVFLFIY) traverse the membrane as a helical segment. Over 296–642 (LKRRRKKKTL…DVSLTDLSAR (347 aa)) the chain is Cytoplasmic. The 288-residue stretch at 333–620 (FSLTNKIGEG…QLPKPSQPGF (288 aa)) folds into the Protein kinase domain. ATP is bound by residues 339–347 (IGEGGFGVV) and K361. Phosphotyrosine is present on Y406. D458 (proton acceptor) is an active-site residue. Residue S462 is modified to Phosphoserine. T498 is subject to Phosphothreonine. Residue Y506 is modified to Phosphotyrosine.

Belongs to the protein kinase superfamily. Ser/Thr protein kinase family. CRK subfamily.

The protein resides in the membrane. It catalyses the reaction L-seryl-[protein] + ATP = O-phospho-L-seryl-[protein] + ADP + H(+). The catalysed reaction is L-threonyl-[protein] + ATP = O-phospho-L-threonyl-[protein] + ADP + H(+). This Arabidopsis thaliana (Mouse-ear cress) protein is Cysteine-rich receptor-like protein kinase 27 (CRK27).